The primary structure comprises 448 residues: DNA repair protein RadA (448 aa).

The C4-type zinc finger occupies 10-27 (CQHCGFTSPKWLGKCVQC). 96-103 (GSPGVGKS) contacts ATP. Residues 253–257 (KNRFG) carry the RadA KNRFG motif motif. The interval 351-448 (DVFINVSGGI…NAVGKIVEWM (98 aa)) is lon-protease-like.

This sequence belongs to the RecA family. RadA subfamily.

Functionally, DNA-dependent ATPase involved in processing of recombination intermediates, plays a role in repairing DNA breaks. Stimulates the branch migration of RecA-mediated strand transfer reactions, allowing the 3' invading strand to extend heteroduplex DNA faster. Binds ssDNA in the presence of ADP but not other nucleotides, has ATPase activity that is stimulated by ssDNA and various branched DNA structures, but inhibited by SSB. Does not have RecA's homology-searching function. The sequence is that of DNA repair protein RadA from Helicobacter pylori (strain ATCC 700392 / 26695) (Campylobacter pylori).